Consider the following 159-residue polypeptide: Major latex protein 149 (159 aa).

It belongs to the MLP family. As to expression, laticifer.

It localises to the vacuole. Its subcellular location is the cytoplasmic vesicle. In terms of biological role, not known; MLPs constitute up to 50% of the soluble latex protein. The chain is Major latex protein 149 (MLP149) from Papaver somniferum (Opium poppy).